The following is a 710-amino-acid chain: Choline transporter-like protein 4 (710 aa).

The Cytoplasmic portion of the chain corresponds to 1 to 34 (MGGKQRDEDDEAYGKPVKYDPSFRGPIKNRSCTD). Residues 35 to 55 (VICCVLFLLFILGYIVVGIVA) form a helical membrane-spanning segment. Residues 56-229 (WLYGDPRQVL…KIFEDFAQSW (174 aa)) lie on the Extracellular side of the membrane. N-linked (GlcNAc...) asparagine glycosylation is found at asparagine 69, asparagine 155, and asparagine 197. A helical transmembrane segment spans residues 230–250 (YWILVALGVALVLSLLFILLL). At 251–252 (RL) the chain is on the cytoplasmic side. The helical transmembrane segment at 253-273 (VAGPLVLVLILGVLGVLAYGI) threads the bilayer. Residues 274 to 309 (YYCWEEYRVLRDKGASISQLGFTTNLSAYQSVQETW) lie on the Extracellular side of the membrane. An N-linked (GlcNAc...) asparagine glycan is attached at asparagine 298. The chain crosses the membrane as a helical span at residues 310 to 330 (LAALIVLAVLEAILLLMLIFL). Over 331–358 (RQRIRIAIALLKEASKAVGQMMSTMFYP) the chain is Cytoplasmic. The chain crosses the membrane as a helical span at residues 359 to 379 (LVTFVLLLICIAYWAMTALYL). At 380–455 (ATSGQPQYVL…GVLGLFWTLN (76 aa)) the chain is on the extracellular side. N-linked (GlcNAc...) asparagine glycans are attached at residues asparagine 393, asparagine 405, and asparagine 416. The chain crosses the membrane as a helical span at residues 456–476 (WVLALGQCVLAGAFASFYWAF). Topologically, residues 477–501 (HKPQDIPTFPLISAFIRTLRYHTGS) are cytoplasmic. The chain crosses the membrane as a helical span at residues 502 to 522 (LAFGALILTLVQIARVILEYI). At 523 to 560 (DHKLRGVQNPVARCIMCCFKCCLWCLEKFIKFLNRNAY) the chain is on the extracellular side. The helical transmembrane segment at 561 to 581 (IMIAIYGKNFCVSAKNAFMLL) threads the bilayer. Over 582–597 (MRNIVRVVVLDKVTDL) the chain is Cytoplasmic. A helical transmembrane segment spans residues 598–618 (LLFFGKLLVVGGVGVLSFFFF). Over 619–638 (SGRIPGLGKDFKSPHLNYYW) the chain is Extracellular. A helical transmembrane segment spans residues 639–659 (LPIMTSILGAYVIASGFFSVF). Topologically, residues 660–710 (GMCVDTLFLCFLEDLERNNGSLDRPYYMSKSLLKILGKKNEAPPDNKKRKK) are cytoplasmic.

It belongs to the CTL (choline transporter-like) family. Post-translationally, N-glycosylated; N-glycosylation of Asn-69, Asn-155 and Asn-393 is required for a proper thiamine pyrophosphate uptake. In terms of tissue distribution, highly expressed in colon, also detected in prostate, trachea and lung. Isoform 3 is also expressed in colon but a lower levels. Expressed in colon at low levels.

The protein resides in the membrane. It localises to the apical cell membrane. It carries out the reaction choline(out) + n H(+)(in) = choline(in) + n H(+)(out). It catalyses the reaction thiamine diphosphate(out) = thiamine diphosphate(in). Functionally, choline transporter that plays a role in the choline-acetylcholine system and is required to the efferent innervation of hair cells in the olivocochlear bundle for the maintenance of physiological function of outer hair cells and the protection of hair cells from acoustic injury. Also described as a thiamine pyrophosphate transporter in colon, may mediate the absorption of microbiota-generated thiamine pyrophosphate and contribute to host thiamine (vitamin B1) homeostasis. Also has thiamine pyrophosphate transporter activity. This Homo sapiens (Human) protein is Choline transporter-like protein 4.